The following is a 190-amino-acid chain: Potassium-transporting ATPase KdpC subunit (190 aa).

The helical transmembrane segment at 10-30 threads the bilayer; the sequence is TFLFLLLITGGVYPLLTTALG.

This sequence belongs to the KdpC family. As to quaternary structure, the system is composed of three essential subunits: KdpA, KdpB and KdpC.

Its subcellular location is the cell inner membrane. Part of the high-affinity ATP-driven potassium transport (or Kdp) system, which catalyzes the hydrolysis of ATP coupled with the electrogenic transport of potassium into the cytoplasm. This subunit acts as a catalytic chaperone that increases the ATP-binding affinity of the ATP-hydrolyzing subunit KdpB by the formation of a transient KdpB/KdpC/ATP ternary complex. The protein is Potassium-transporting ATPase KdpC subunit of Escherichia coli O7:K1 (strain IAI39 / ExPEC).